A 101-amino-acid polypeptide reads, in one-letter code: MSHDHNHDHEERELITLVDEQGNETLFEILLTIDGKEEFGKNYVLLVPVNAEEDEDGQVEIQAYSFIENEDGTEGELQPIPEDSEDEWNMIEEVFNSFMEE.

It belongs to the UPF0473 family.

This chain is UPF0473 protein spr0177, found in Streptococcus pneumoniae (strain ATCC BAA-255 / R6).